The sequence spans 170 residues: Protein GrpE (170 aa).

Positions 1-29 (MSEEIKNEEIVEEVEATEEVVETPEKSEL) are disordered. A compositionally biased stretch (acidic residues) spans 10-22 (IVEEVEATEEVVE).

This sequence belongs to the GrpE family. Homodimer.

The protein localises to the cytoplasm. In terms of biological role, participates actively in the response to hyperosmotic and heat shock by preventing the aggregation of stress-denatured proteins, in association with DnaK and GrpE. It is the nucleotide exchange factor for DnaK and may function as a thermosensor. Unfolded proteins bind initially to DnaJ; upon interaction with the DnaJ-bound protein, DnaK hydrolyzes its bound ATP, resulting in the formation of a stable complex. GrpE releases ADP from DnaK; ATP binding to DnaK triggers the release of the substrate protein, thus completing the reaction cycle. Several rounds of ATP-dependent interactions between DnaJ, DnaK and GrpE are required for fully efficient folding. The protein is Protein GrpE of Streptococcus suis (strain 98HAH33).